The following is a 562-amino-acid chain: 3-hydroxy-3-methylglutaryl-coenzyme A reductase 2 (562 aa).

Helical transmembrane passes span 32 to 56 (ALPLPLYLTNTFFLSLFFATVYFLL) and 77 to 100 (ICALIGFVASFIYLLGFCGIDLIF). Residues 101-146 (RSSSDDDVWVNDGMIPCNQSLDCREVLPIKPNSVDPPRESELDSVE) form a linker region. An N-linked (GlcNAc...) asparagine glycan is attached at asparagine 118. Residues 147-562 (DEEIVKLVID…DIGPSSQVNR (416 aa)) form a catalytic region. Glutamate 240 functions as the Charge relay system in the catalytic mechanism. Asparagine 304 carries N-linked (GlcNAc...) asparagine glycosylation. Residues lysine 372 and aspartate 448 each act as charge relay system in the active site. The Proton donor role is filled by histidine 544. Asparagine 548 carries N-linked (GlcNAc...) asparagine glycosylation. Position 550 is a phosphoserine (serine 550).

Belongs to the HMG-CoA reductase family. Restricted to young seedlings, roots, and inflorescences. Expressed in root tips, shoot apex, secretory zone of the stigma, microspores, mature pollen grains, gynoecium vascular tissue and fertilized ovules.

The protein localises to the endoplasmic reticulum membrane. The catalysed reaction is (R)-mevalonate + 2 NADP(+) + CoA = (3S)-3-hydroxy-3-methylglutaryl-CoA + 2 NADPH + 2 H(+). Its pathway is metabolic intermediate biosynthesis; (R)-mevalonate biosynthesis; (R)-mevalonate from acetyl-CoA: step 3/3. Its activity is regulated as follows. Regulated at the post-translational level in response to alterations of the sphingolipid and the sterol biosynthetic pathways. Catalyzes the synthesis of mevalonate. The specific precursor of all isoprenoid compounds present in plants. The protein is 3-hydroxy-3-methylglutaryl-coenzyme A reductase 2 (HMG2) of Arabidopsis thaliana (Mouse-ear cress).